A 232-amino-acid polypeptide reads, in one-letter code: Octanoyltransferase (232 aa).

Positions 33–216 (GRAQDTVILL…HLVRALSNGS (184 aa)) constitute a BPL/LPL catalytic domain. Substrate contacts are provided by residues 71 to 78 (RGGRITWH), 146 to 148 (AIG), and 159 to 161 (GFA). C177 serves as the catalytic Acyl-thioester intermediate.

The protein belongs to the LipB family.

The protein resides in the cytoplasm. It catalyses the reaction octanoyl-[ACP] + L-lysyl-[protein] = N(6)-octanoyl-L-lysyl-[protein] + holo-[ACP] + H(+). The protein operates within protein modification; protein lipoylation via endogenous pathway; protein N(6)-(lipoyl)lysine from octanoyl-[acyl-carrier-protein]: step 1/2. Catalyzes the transfer of endogenously produced octanoic acid from octanoyl-acyl-carrier-protein onto the lipoyl domains of lipoate-dependent enzymes. Lipoyl-ACP can also act as a substrate although octanoyl-ACP is likely to be the physiological substrate. The sequence is that of Octanoyltransferase from Clavibacter sepedonicus (Clavibacter michiganensis subsp. sepedonicus).